A 213-amino-acid chain; its full sequence is Protein-L-isoaspartate O-methyltransferase (213 aa).

Serine 64 is a catalytic residue.

It belongs to the methyltransferase superfamily. L-isoaspartyl/D-aspartyl protein methyltransferase family.

It localises to the cytoplasm. It carries out the reaction [protein]-L-isoaspartate + S-adenosyl-L-methionine = [protein]-L-isoaspartate alpha-methyl ester + S-adenosyl-L-homocysteine. In terms of biological role, catalyzes the methyl esterification of L-isoaspartyl residues in peptides and proteins that result from spontaneous decomposition of normal L-aspartyl and L-asparaginyl residues. It plays a role in the repair and/or degradation of damaged proteins. The sequence is that of Protein-L-isoaspartate O-methyltransferase from Christiangramia forsetii (strain DSM 17595 / CGMCC 1.15422 / KT0803) (Gramella forsetii).